The primary structure comprises 392 residues: GPI alpha-1,4-mannosyltransferase I, catalytic subunit (392 aa).

Residues 1–4 (MEAR) are Cytoplasmic-facing. Residues 5-25 (VCVLFGAAALLRLLLLCVGVY) traverse the membrane as a helical segment. Residues 26–65 (QDQTLKLKYTDVDYHVFTDAARFITQGESPYRRSTFRYTP) lie on the Lumenal side of the membrane. A helical membrane pass occupies residues 66 to 86 (LLALLLVPNVYLSLLFGKLLF). The Cytoplasmic portion of the chain corresponds to 87–125 (GFCDLLSGLLMFRLLVLRGASHGSACVSCGLWLLNPLPM). A helical membrane pass occupies residues 126-148 (AVSTRGNAESVLAVLVLSTLLCL). At 149–156 (QLRKHTTA) the chain is on the lumenal side. A helical transmembrane segment spans residues 157 to 177 (ALLFGLSVHMKIYPVTYALPI). At 178–198 (ALALTAAPARGRGVLLRFFSP) the chain is on the cytoplasmic side. The chain crosses the membrane as a helical span at residues 199–219 (ALLRFAAVSAAVFLSLGLIFY). Residues 220–261 (CRYGWEFLQEAYLYHLTRRDLRHNFSPFFYLQYVCAERCWSS) are Lumenal-facing. A helical transmembrane segment spans residues 262 to 282 (GLLPLLLLPQLLLLLLASAAF). Residues 283-302 (SSDLPFCCFLHTAVFVSFNR) are Cytoplasmic-facing. Residues 303 to 323 (VCTSQYFLWYLCLLPVVLPRL) traverse the membrane as a helical segment. Over 324–330 (RLRLGRG) the chain is Lumenal. A helical membrane pass occupies residues 331-351 (LLLLLLWLLLQGLWLAPAYLL). At 352 to 360 (EFQGWNSFS) the chain is on the cytoplasmic side. A helical transmembrane segment spans residues 361-381 (WIWAASLLFLLTNTFILAQII). At 382 to 392 (QHYRPHDRKAD) the chain is on the lumenal side.

This sequence belongs to the PIGM family. In terms of assembly, part of the glycosylphosphatidylinositol-mannosyltransferase I complex that is composed of PIGM and PIGX.

The protein resides in the endoplasmic reticulum membrane. It functions in the pathway glycolipid biosynthesis; glycosylphosphatidylinositol-anchor biosynthesis. Its function is as follows. Catalytic subunit of the glycosylphosphatidylinositol-mannosyltransferase I complex which catalyzes the transfer of the first mannose, via an alpha-1,4 bond from a dolichol-phosphate-mannose (Dol-P-Man) to the glucosaminyl acyl phosphatidylinositol (GlcN-(acyl)PI) intermediate to generate alpha-D-Man-(1-&gt;4)-alpha-D-GlcN-(1-&gt;6)-(1-radyl,2-acyl-sn-glycero-3-phospho)-2-acyl-inositol and participates in the sixth step of the glycosylphosphatidylinositol-anchor biosynthesis. The chain is GPI alpha-1,4-mannosyltransferase I, catalytic subunit from Danio rerio (Zebrafish).